The primary structure comprises 343 residues: Nuclear hormone receptor family member nhr-167 (343 aa).

A DNA-binding region (nuclear receptor) is located at residues 5–81 (HQKCAVCGRF…VGMTLPSYLL (77 aa)). NR C4-type zinc fingers lie at residues 8–28 (CAVC…CNSC) and 45–64 (CFRG…CTSC). The NR LBD domain maps to 101-339 (THNKRMDSLF…KKLVKDGIEA (239 aa)).

This sequence belongs to the nuclear hormone receptor family.

Its subcellular location is the nucleus. Its function is as follows. Orphan nuclear receptor. This Caenorhabditis elegans protein is Nuclear hormone receptor family member nhr-167 (nhr-167).